The chain runs to 222 residues: MVVLGQKFPEVEVQTTHGRMRLPDHYRGKWFVLFSHPADFTPVCTTEFVEFARNYDKFKAMNTELIGLSIDQVFSHIKWIEWIKEKFNVEIPFPVIADDQGELARMLGMISPYKGTNTVRAVFIVDPEGYIRAMLYYPQETGRNIPEILRLVEALQTADKYGVATPANWHVDRYEFKPSSIVGNDVIIPPASSLEEKKDREERAKKGEIECFDWWFCHKKLE.

The region spanning 2–157 is the Thioredoxin domain; sequence VVLGQKFPEV…ILRLVEALQT (156 aa). The active-site Cysteine sulfenic acid (-SOH) intermediate is the Cys44. Residue Arg120 coordinates substrate. A disulfide bridge connects residues Cys211 and Cys217.

This sequence belongs to the peroxiredoxin family. Prx6 subfamily. Homodecamer. Pentamer of dimers that assemble into a ring structure.

Its subcellular location is the cytoplasm. The enzyme catalyses a hydroperoxide + [thioredoxin]-dithiol = an alcohol + [thioredoxin]-disulfide + H2O. In terms of biological role, thiol-specific peroxidase that catalyzes the reduction of hydrogen peroxide and organic hydroperoxides to water and alcohols, respectively. Plays a role in cell protection against oxidative stress by detoxifying peroxides. The protein is Peroxiredoxin of Nanoarchaeum equitans (strain Kin4-M).